Here is a 140-residue protein sequence, read N- to C-terminus: Ribosome maturation factor RimP (140 aa).

This sequence belongs to the RimP family.

It is found in the cytoplasm. Its function is as follows. Required for maturation of 30S ribosomal subunits. The polypeptide is Ribosome maturation factor RimP (Campylobacter lari (strain RM2100 / D67 / ATCC BAA-1060)).